Here is a 379-residue protein sequence, read N- to C-terminus: Queuine tRNA-ribosyltransferase (379 aa).

Catalysis depends on Asp95, which acts as the Proton acceptor. Substrate contacts are provided by residues Asp95–Phe99, Asp149, Gln197, and Gly224. Residues Gly255–Glu261 are RNA binding. The active-site Nucleophile is Asp274. Residues Cys312, Cys314, Cys317, and His343 each coordinate Zn(2+).

Belongs to the queuine tRNA-ribosyltransferase family. Homodimer. Within each dimer, one monomer is responsible for RNA recognition and catalysis, while the other monomer binds to the replacement base PreQ1. Requires Zn(2+) as cofactor.

It carries out the reaction 7-aminomethyl-7-carbaguanine + guanosine(34) in tRNA = 7-aminomethyl-7-carbaguanosine(34) in tRNA + guanine. Its pathway is tRNA modification; tRNA-queuosine biosynthesis. Its function is as follows. Catalyzes the base-exchange of a guanine (G) residue with the queuine precursor 7-aminomethyl-7-deazaguanine (PreQ1) at position 34 (anticodon wobble position) in tRNAs with GU(N) anticodons (tRNA-Asp, -Asn, -His and -Tyr). Catalysis occurs through a double-displacement mechanism. The nucleophile active site attacks the C1' of nucleotide 34 to detach the guanine base from the RNA, forming a covalent enzyme-RNA intermediate. The proton acceptor active site deprotonates the incoming PreQ1, allowing a nucleophilic attack on the C1' of the ribose to form the product. After dissociation, two additional enzymatic reactions on the tRNA convert PreQ1 to queuine (Q), resulting in the hypermodified nucleoside queuosine (7-(((4,5-cis-dihydroxy-2-cyclopenten-1-yl)amino)methyl)-7-deazaguanosine). The sequence is that of Queuine tRNA-ribosyltransferase from Solibacter usitatus (strain Ellin6076).